A 159-amino-acid chain; its full sequence is Gigasin-1 (159 aa).

Disordered stretches follow at residues 1–33 (GKAT…HDQT) and 80–159 (KESY…KYRR).

Component of the organic matrix of calcified shell layers.

The polypeptide is Gigasin-1 (Magallana gigas (Pacific oyster)).